Here is a 510-residue protein sequence, read N- to C-terminus: D-alanine--D-alanyl carrier protein ligase (510 aa).

An ATP-binding site is contributed by 157-158 (TS). D202 provides a ligand contact to D-alanine. 297–302 (NTYGPT) contributes to the ATP binding site. V306 is a binding site for D-alanine. Residues D389 and K498 each contribute to the ATP site. A D-alanine-binding site is contributed by K498.

It belongs to the ATP-dependent AMP-binding enzyme family. DltA subfamily.

It localises to the cytoplasm. It catalyses the reaction holo-[D-alanyl-carrier protein] + D-alanine + ATP = D-alanyl-[D-alanyl-carrier protein] + AMP + diphosphate. Its pathway is cell wall biogenesis; lipoteichoic acid biosynthesis. Functionally, catalyzes the first step in the D-alanylation of lipoteichoic acid (LTA), the activation of D-alanine and its transfer onto the D-alanyl carrier protein (Dcp) DltC. In an ATP-dependent two-step reaction, forms a high energy D-alanyl-AMP intermediate, followed by transfer of the D-alanyl residue as a thiol ester to the phosphopantheinyl prosthetic group of the Dcp. D-alanylation of LTA plays an important role in modulating the properties of the cell wall in Gram-positive bacteria, influencing the net charge of the cell wall. The polypeptide is D-alanine--D-alanyl carrier protein ligase (Listeria monocytogenes serotype 4a (strain HCC23)).